The primary structure comprises 215 residues: Peptide methionine sulfoxide reductase MsrA (215 aa).

C58 is an active-site residue.

The protein belongs to the MsrA Met sulfoxide reductase family.

The catalysed reaction is L-methionyl-[protein] + [thioredoxin]-disulfide + H2O = L-methionyl-(S)-S-oxide-[protein] + [thioredoxin]-dithiol. It catalyses the reaction [thioredoxin]-disulfide + L-methionine + H2O = L-methionine (S)-S-oxide + [thioredoxin]-dithiol. Its function is as follows. Has an important function as a repair enzyme for proteins that have been inactivated by oxidation. Catalyzes the reversible oxidation-reduction of methionine sulfoxide in proteins to methionine. The chain is Peptide methionine sulfoxide reductase MsrA from Pseudomonas aeruginosa (strain LESB58).